The following is a 146-amino-acid chain: Putative pre-16S rRNA nuclease (146 aa).

This sequence belongs to the YqgF nuclease family.

Its subcellular location is the cytoplasm. Its function is as follows. Could be a nuclease involved in processing of the 5'-end of pre-16S rRNA. This is Putative pre-16S rRNA nuclease from Methylobacillus flagellatus (strain ATCC 51484 / DSM 6875 / VKM B-1610 / KT).